Consider the following 129-residue polypeptide: Large ribosomal subunit protein bL17 (129 aa).

This sequence belongs to the bacterial ribosomal protein bL17 family. As to quaternary structure, part of the 50S ribosomal subunit. Contacts protein L32.

This Pseudomonas aeruginosa (strain UCBPP-PA14) protein is Large ribosomal subunit protein bL17.